The sequence spans 511 residues: MEFKDLISSLNLIRLLPEGIVTILLVFILLIDLTFQKRVLSWLLYIPLVGLVCSMVVLLRQWGSQDTLSFLGSFQGDSLSIAFRFFILLSAVLCILLSKEYVERSRTALTEFFVLLLTAVIGGMLLSGANDLIMIFLSLETLGLSSYLLTGYMKKDLRSNEAAIKYLLIGAASSSILLYGLSLLYGLSGGAIEISTIAKNIVDKGLSQSFASWVALIFITVGIGFKVAAAPFHQWAPDVYEGSPTPVVAFLSVGSKAAGLALATRILTTLFPYLTNEWHLLFQVLASLSMILGNLIAISQTSMKRMLGYSSVSQAGFLMIGLIAGNPNGYSSMLVYMLLYIFMNLGAFACIILFGLKAGTDQIRDYAGLYRKDPFLVFCFSISLLSLGGIPPLAGFFGKLYLFWSGWQSGFYILVFIGLFTSVISIYYYLRVIKVMIVTEPQEMSIYVQRYTQRRWSITQLQPIELGIGLCVLGSVLAGVLVNPIINIAQQTVLYTPLLQQSEELMRTLTF.

Helical transmembrane passes span 15–35 (LLPE…DLTF), 39–59 (VLSW…VVLL), 78–98 (SLSI…ILLS), 108–128 (ALTE…LLSG), 132–152 (LIMI…LTGY), 167–187 (LLIG…LYGL), 210–230 (FASW…VAAA), 244–264 (PTPV…ALAT), 278–298 (WHLL…LIAI), 306–326 (MLGY…IAGN), 334–354 (LVYM…IILF), 377–397 (VFCF…AGFF), 410–430 (GFYI…YYYL), and 466–486 (LGIG…NPII).

The protein belongs to the complex I subunit 2 family. NDH is composed of at least 16 different subunits, 5 of which are encoded in the nucleus.

It is found in the plastid. Its subcellular location is the chloroplast thylakoid membrane. It catalyses the reaction a plastoquinone + NADH + (n+1) H(+)(in) = a plastoquinol + NAD(+) + n H(+)(out). The enzyme catalyses a plastoquinone + NADPH + (n+1) H(+)(in) = a plastoquinol + NADP(+) + n H(+)(out). Its function is as follows. NDH shuttles electrons from NAD(P)H:plastoquinone, via FMN and iron-sulfur (Fe-S) centers, to quinones in the photosynthetic chain and possibly in a chloroplast respiratory chain. The immediate electron acceptor for the enzyme in this species is believed to be plastoquinone. Couples the redox reaction to proton translocation, and thus conserves the redox energy in a proton gradient. In Chlorokybus atmophyticus (Soil alga), this protein is NAD(P)H-quinone oxidoreductase subunit 2, chloroplastic.